The following is a 548-amino-acid chain: Membrane protein insertase YidC (548 aa).

A helical transmembrane segment spans residues 6–26 (NLLVIALLFVSFMIWQAWEQD). The interval 28–56 (NPQPQTQQTTQTTTTAAGSAADQGVPASG) is disordered. The span at 29–42 (PQPQTQQTTQTTTT) shows a compositional bias: low complexity. Transmembrane regions (helical) follow at residues 350 to 370 (FVGN…GIMY), 424 to 444 (FPLI…MGSI), 458 to 478 (LSAQ…MFFI), and 499 to 519 (PVIF…YYIV).

This sequence belongs to the OXA1/ALB3/YidC family. Type 1 subfamily. As to quaternary structure, interacts with the Sec translocase complex via SecD. Specifically interacts with transmembrane segments of nascent integral membrane proteins during membrane integration.

It is found in the cell inner membrane. Functionally, required for the insertion and/or proper folding and/or complex formation of integral membrane proteins into the membrane. Involved in integration of membrane proteins that insert both dependently and independently of the Sec translocase complex, as well as at least some lipoproteins. Aids folding of multispanning membrane proteins. The chain is Membrane protein insertase YidC from Salmonella enteritidis PT4 (strain P125109).